A 128-amino-acid chain; its full sequence is MSILGVGIDILSILRIKRIIKNKLGTKFSQKILSNYELNILPNCKQNYTKFLANRFSVKEAASKALGTGIRNGLKFSDLELHHDKNGKPYLKFLKQAKKMLQAMNTKSTHVSLSDEKLYVCAIVIFED.

Mg(2+) is bound by residues Asp9 and Glu60.

Belongs to the P-Pant transferase superfamily. AcpS family. Mg(2+) serves as cofactor.

The protein resides in the cytoplasm. It catalyses the reaction apo-[ACP] + CoA = holo-[ACP] + adenosine 3',5'-bisphosphate + H(+). Transfers the 4'-phosphopantetheine moiety from coenzyme A to a Ser of acyl-carrier-protein. The sequence is that of Holo-[acyl-carrier-protein] synthase from Buchnera aphidicola subsp. Baizongia pistaciae (strain Bp).